We begin with the raw amino-acid sequence, 312 residues long: Regulation of nuclear pre-mRNA domain-containing protein 1A (312 aa).

Position 2 is an N-acetylserine (Ser2). Residues 2 to 133 (SAFSEAALEK…QLKHALYGDK (132 aa)) form the CID domain. Residues Ser153, Ser156, and Ser285 each carry the phosphoserine modification. Residues 244-286 (LADFLRCQKEALAEKEHKLEEYKRKLARVSLVRKELRARIQSL) adopt a coiled-coil conformation.

It belongs to the UPF0400 (RTT103) family. May form a heterodimer with RPRD1B. Associates with the RNA polymerase II subunit POLR2A (via CTD phosphorylated at 'Ser-2' and 'Ser-7' of the heptad repeats).

It is found in the nucleus. Functionally, interacts with phosphorylated C-terminal heptapeptide repeat domain (CTD) of the largest RNA polymerase II subunit POLR2A, and participates in dephosphorylation of the CTD by RPAP2. May act as a negative regulator of cyclin-D1 (CCND1) and cyclin-E (CCNE1) in the cell cycle. The chain is Regulation of nuclear pre-mRNA domain-containing protein 1A (Rprd1a) from Mus musculus (Mouse).